The sequence spans 425 residues: tRNA(Met) cytidine acetate ligase (425 aa).

ATP-binding positions include 7 to 20, Gly102, Asn162, and 187 to 188; these read VVEYNPFHFGHLHH and RI.

The protein belongs to the TmcAL family.

It is found in the cytoplasm. The catalysed reaction is cytidine(34) in elongator tRNA(Met) + acetate + ATP = N(4)-acetylcytidine(34) in elongator tRNA(Met) + AMP + diphosphate. In terms of biological role, catalyzes the formation of N(4)-acetylcytidine (ac(4)C) at the wobble position of elongator tRNA(Met), using acetate and ATP as substrates. First activates an acetate ion to form acetyladenylate (Ac-AMP) and then transfers the acetyl group to tRNA to form ac(4)C34. This Fervidobacterium nodosum (strain ATCC 35602 / DSM 5306 / Rt17-B1) protein is tRNA(Met) cytidine acetate ligase.